Reading from the N-terminus, the 859-residue chain is Cadherin-related family member 1 (859 aa).

A signal peptide spans 1–21 (MRRGPRVALVLGLLRIYLAQA). The Extracellular segment spans residues 22-701 (NFAPHFFDNG…LIQTKDNPMK (680 aa)). Cadherin domains follow at residues 36-135 (NGNM…APRF), 136-247 (IQEP…APIF), 248-354 (VGTP…PPTF), 360-473 (PQNK…VPKF), 474-577 (TSHY…YPQF), and 569-691 (DVND…MAAF). Asn58 and Asn89 each carry an N-linked (GlcNAc...) asparagine glycan. Asn288 carries N-linked (GlcNAc...) asparagine glycosylation. A helical transmembrane segment spans residues 702-722 (AVGVLAGVMAIVVAITVLIST). Residues 723–859 (ATFWRNKKSN…KKSLDNKAYI (137 aa)) are Cytoplasmic-facing. Residues 793-838 (PALPPPPKMASSMVAQQTVPTVSGSLTPQPSPQLPTPKTLGGPVQS) are disordered. Over residues 805-816 (MVAQQTVPTVSG) the composition is skewed to polar residues.

In terms of assembly, interacts with PROM1. In terms of processing, undergoes proteolytic cleavage; produces a soluble 95 kDa N-terminal fragment and a 25 kDa cell-associated C-terminal fragment. Expressed in cone and rod photoreceptor cells (at protein level). Expressed in photoreceptor cells of the outer nuclear layer of the retina. Expressed in mitral and tufted cells in the olfactory bulb.

It is found in the cell membrane. In terms of biological role, potential calcium-dependent cell-adhesion protein. May be required for the structural integrity of the outer segment (OS) of photoreceptor cells. The chain is Cadherin-related family member 1 (Cdhr1) from Mus musculus (Mouse).